The primary structure comprises 151 residues: UPF0208 membrane protein YfbV (151 aa).

2 helical membrane passes run 46–65 (YAIRFMPPVAVFTLCWQIAL) and 69–91 (LGPAVATALFALSLPMQGLWWLG).

It belongs to the UPF0208 family.

It localises to the cell inner membrane. The chain is UPF0208 membrane protein YfbV from Salmonella choleraesuis (strain SC-B67).